Consider the following 1352-residue polypeptide: MTYSLTEKKRIRKDFATRSSILEVPYLLSLQKESFKEFLQKDKKPLERDPIGLHSAFSSVFPIHGVAGTADLEYVSYTMGQPEFDVKECKQRGVTYSSPLRVKMRLVLFDKDAPAGKRPVKDVKEQEVYLGDVPLMTENGTFVINGTERVIVTQLHRSPGVIFDSDKGKSHSSGKVLFNARIIPYRGSWLDFEFDHNDCVFVRIDRRRKLPVSIIFRAMGYSSEEILDTFFDHTHISYKKGAFVMQLVPSQLKGQTAAFDIADGDKVIIKAGKKITARNIKQLQEAKVDSVVVPEEYLLGKVLSSGITNEETGELVARSNEVIASDLIETMKSIKDLSFRILFIDDLENGSYISDTLNLDTTTSQLEAQIEIYRMMRPGEPPTKESSEALFNSLFFDEARYDLSSVGRMKLNRRLGRKDNEGSLVLENQDVVDVVKELLNIRNGLSTIDDIDTLGNRRIRAVGEMAENAFRVGLVRVERAVKERLNQAETDGLLPQDLINAKPVSAAIKEFFGSSQLSQFMDQVNPLSEVTHKRRVSALGPGGLTRERAGFEVRDVHPTHYGRVCPIETPEGPNIGLINTLAIYAKTNKYGFLETPYRKVIDGQVTEEVEYVSAIDEAQFVIAQASAAMDSDNKLLDELVTARHKNETILASSQDIDYMDVSPKQIVSVAASLIPFLEHDDANRALMGSNMQRQAVPTLRADKPLVGTGIEKTVAIDSGVTVIALRGGEIVSSDSARIVVRANQEEIAEGETGVDIYNLIKYQRSNQNTCINQKPIVKAGDVVSRGDVLADGPSTDLGELAIGQNMRIAFMPWNGYNFEDSILVSERVVQEDRYTTIHIEELTCLARDTKLGPEEVTSDIPNVGEAALSRLDESGIVYVGAEVKQGDILVGKVTPKGETQLTPEEKLLRAIFGEKASDVKDTSLRVSKGVEGTVIDVQVFTREGVKKDARALAIQEDELQKVRKDIDEQYKILEEDTIDRIQPMLIGQKLVDGTEITADFLASQDSSKWFGLNVADDALSSHLESLEKQLVAKKEELNGVFEEKKKKLTQGDDLQPGVSKMVKVYVAVKRRIQPGDKMAGRHGNKGVISRICPVEDMPYDETGRPVDICLNPLGVPSRMNVGQILETHLGLAAEGLGAKINAMLEQQADIKELKSFLHKIYNETQGQKVDFDSLTDAEIIELAGNLRKGVPMASPVFDGASEDEIKALLRLADLPESGQMKLYDGISGEEFDRPVTVGYMYYLKLNHLVDDKMHARSTGPYSLVTQQPLGGKAQFGGQRFGEMEVWALEAYGAAFTLQEMLTVKSDDLNGRTRMYKNIVDGNEYMEPGIPESFSVLRKEIRALGIDIELEQE.

Belongs to the RNA polymerase beta chain family. As to quaternary structure, the RNAP catalytic core consists of 2 alpha, 1 beta, 1 beta' and 1 omega subunit. When a sigma factor is associated with the core the holoenzyme is formed, which can initiate transcription.

The catalysed reaction is RNA(n) + a ribonucleoside 5'-triphosphate = RNA(n+1) + diphosphate. Functionally, DNA-dependent RNA polymerase catalyzes the transcription of DNA into RNA using the four ribonucleoside triphosphates as substrates. This chain is DNA-directed RNA polymerase subunit beta, found in Hydrogenovibrio crunogenus (strain DSM 25203 / XCL-2) (Thiomicrospira crunogena).